Consider the following 255-residue polypeptide: 4-hydroxy-tetrahydrodipicolinate reductase (255 aa).

NAD(+) is bound by residues 9–14 (GFKGKM), 89–91 (GTT), and 115–118 (APNF). Histidine 145 functions as the Proton donor/acceptor in the catalytic mechanism. Position 146 (histidine 146) interacts with (S)-2,3,4,5-tetrahydrodipicolinate. Lysine 149 serves as the catalytic Proton donor. 155–156 (GT) is a (S)-2,3,4,5-tetrahydrodipicolinate binding site.

Belongs to the DapB family.

The protein resides in the cytoplasm. The enzyme catalyses (S)-2,3,4,5-tetrahydrodipicolinate + NAD(+) + H2O = (2S,4S)-4-hydroxy-2,3,4,5-tetrahydrodipicolinate + NADH + H(+). It catalyses the reaction (S)-2,3,4,5-tetrahydrodipicolinate + NADP(+) + H2O = (2S,4S)-4-hydroxy-2,3,4,5-tetrahydrodipicolinate + NADPH + H(+). Its pathway is amino-acid biosynthesis; L-lysine biosynthesis via DAP pathway; (S)-tetrahydrodipicolinate from L-aspartate: step 4/4. Functionally, catalyzes the conversion of 4-hydroxy-tetrahydrodipicolinate (HTPA) to tetrahydrodipicolinate. The sequence is that of 4-hydroxy-tetrahydrodipicolinate reductase from Streptococcus sanguinis (strain SK36).